The chain runs to 259 residues: Small ribosomal subunit protein uS2 (259 aa).

A disordered region spans residues 224 to 259 (GKQGEDDQQVAPAEDVAEEVSDESLQDLKNSVEGND). The span at 238–248 (DVAEEVSDESL) shows a compositional bias: acidic residues. The span at 250–259 (DLKNSVEGND) shows a compositional bias: polar residues.

This sequence belongs to the universal ribosomal protein uS2 family.

The sequence is that of Small ribosomal subunit protein uS2 from Limosilactobacillus fermentum (strain NBRC 3956 / LMG 18251) (Lactobacillus fermentum).